Reading from the N-terminus, the 148-residue chain is WAP four-disulfide core domain protein 12 (148 aa).

The signal sequence occupies residues 1–23; it reads MRSYSFWFLTAFLVFATLALGEA. The WAP domain occupies 27 to 74; that stretch reads GKEKWGNCPAEKGSCIKSGPSQCHADNDCPGDKKCCFLSCSFKCVSPD. 4 disulfides stabilise this stretch: C34/C62, C41/C66, C49/C61, and C55/C70. The interval 74 to 148 is disordered; that stretch reads DRIRKEGGNE…QEASPQKEWS (75 aa).

The protein localises to the secreted. In terms of biological role, antibacterial protein. Putative acid-stable proteinase inhibitor. The polypeptide is WAP four-disulfide core domain protein 12 (WFDC12) (Lemur catta (Ring-tailed lemur)).